The following is a 250-amino-acid chain: Triosephosphate isomerase (250 aa).

Position 9 to 11 (9 to 11 (NWK)) interacts with substrate. The active-site Electrophile is His-94. Glu-166 serves as the catalytic Proton acceptor. Substrate is bound by residues Gly-172, Ser-212, and 233 to 234 (GG).

This sequence belongs to the triosephosphate isomerase family. Homodimer.

The protein resides in the cytoplasm. It carries out the reaction D-glyceraldehyde 3-phosphate = dihydroxyacetone phosphate. Its pathway is carbohydrate biosynthesis; gluconeogenesis. It functions in the pathway carbohydrate degradation; glycolysis; D-glyceraldehyde 3-phosphate from glycerone phosphate: step 1/1. Involved in the gluconeogenesis. Catalyzes stereospecifically the conversion of dihydroxyacetone phosphate (DHAP) to D-glyceraldehyde-3-phosphate (G3P). This Treponema denticola (strain ATCC 35405 / DSM 14222 / CIP 103919 / JCM 8153 / KCTC 15104) protein is Triosephosphate isomerase.